A 395-amino-acid chain; its full sequence is MTSILTNVAAMAALQTLRGIDSNMEETQARVSSGLRVGTASDNAAYWSIATTMRSDNMALSAVQDALGLGAAKVDTAYAGMENAVEVVKEIRAKLVAATEDGVDKAKIQEEIEQLKQQLTSIATAASFSGENWLQADLTAPVTKSVVGSFVRDSSGVVSVKTIDYVLDGNSVLFDTVGNNGILDKVYDVSESSVTLSINTGGVVSEHTVAAYTVDDLIAGGAVFQGNYALAGGVNYVKVEGVWVEAVASSGAPGQEVAAVTTAAAPITADSWAVDTTAGPAASVPAPASIENIDITNAAQAANLDALIRGVDEALEDLISATSALGSISMRIGMQEEFVSKLTDSIDSGIGRLVDADMNEESTRLKALQTQQQLAIQSLSIANTNSENILQLFRQ.

This sequence belongs to the bacterial flagellin family.

Its subcellular location is the secreted. It is found in the bacterial flagellum. Flagellin is the subunit protein which polymerizes to form the filaments of bacterial flagella. The polypeptide is Flagellin D (flaD) (Rhizobium meliloti (Ensifer meliloti)).